We begin with the raw amino-acid sequence, 239 residues long: Fumarate reductase iron-sulfur subunit (239 aa).

A 2Fe-2S ferredoxin-type domain is found at 5–95 (LTIRVFKYDP…DGVITLLPLP (91 aa)). [2Fe-2S] cluster contacts are provided by cysteine 57, cysteine 62, cysteine 65, and cysteine 77. In terms of domain architecture, 4Fe-4S ferredoxin-type spans 142-171 (AQEVFELDRCIECGCCIAACGTKIMREDFV). [4Fe-4S] cluster contacts are provided by cysteine 151, cysteine 154, and cysteine 157. The [3Fe-4S] cluster site is built by cysteine 161, cysteine 208, and cysteine 214. Cysteine 218 is a [4Fe-4S] cluster binding site.

It belongs to the succinate dehydrogenase/fumarate reductase iron-sulfur protein family. Part of an enzyme complex containing three subunits: a flavoprotein (frdA), an iron-sulfur protein (frdB), and diheme cytochrome b (frdC). The cofactor is [2Fe-2S] cluster. It depends on [3Fe-4S] cluster as a cofactor. Requires [4Fe-4S] cluster as cofactor.

It is found in the cell inner membrane. The enzyme catalyses a menaquinone + succinate = a menaquinol + fumarate. Its function is as follows. The fumarate reductase enzyme complex is required for fumarate respiration using formate or sulfide as electron donor. The sequence is that of Fumarate reductase iron-sulfur subunit (frdB) from Wolinella succinogenes (strain ATCC 29543 / DSM 1740 / CCUG 13145 / JCM 31913 / LMG 7466 / NCTC 11488 / FDC 602W) (Vibrio succinogenes).